Reading from the N-terminus, the 228-residue chain is Sec-independent protein translocase protein TatB (228 aa).

The chain crosses the membrane as a helical span at residues 1 to 21 (MFDFGLGELVFVGIIALIVLG). Disordered regions lie at residues 109-162 (DFGV…AETD) and 197-228 (PHTTSLRKQAISRKRDFRPKHRAKPKLRVRKS). The span at 206-228 (AISRKRDFRPKHRAKPKLRVRKS) shows a compositional bias: basic residues.

Belongs to the TatB family. As to quaternary structure, the Tat system comprises two distinct complexes: a TatABC complex, containing multiple copies of TatA, TatB and TatC subunits, and a separate TatA complex, containing only TatA subunits. Substrates initially bind to the TatABC complex, which probably triggers association of the separate TatA complex to form the active translocon.

Its subcellular location is the cell inner membrane. In terms of biological role, part of the twin-arginine translocation (Tat) system that transports large folded proteins containing a characteristic twin-arginine motif in their signal peptide across membranes. Together with TatC, TatB is part of a receptor directly interacting with Tat signal peptides. TatB may form an oligomeric binding site that transiently accommodates folded Tat precursor proteins before their translocation. This is Sec-independent protein translocase protein TatB from Neisseria meningitidis serogroup B (strain ATCC BAA-335 / MC58).